A 242-amino-acid chain; its full sequence is Vacuole localized DSC protein 1 (242 aa).

A run of 2 helical transmembrane segments spans residues 128-148 and 152-172; these read PYGF…PTAF and LLLV…INGS.

As to quaternary structure, part of the vacuole-localized DSC E3 ligase complex composed of at least TUL1, DSC2, DSC3, UBX3, CDC48 and VLD1.

The protein resides in the vacuole membrane. Component of the vacuole-localized DSC E3 ubiquitin ligase complex involved in the targeting of the complex to the vacuole membrane via the AP3 pathway to ubiquinate vacuolar membrane proteins. Competes with GLD1 to determine the subcellular localizations of the DSC complex. In Saccharomyces cerevisiae (strain ATCC 204508 / S288c) (Baker's yeast), this protein is Vacuole localized DSC protein 1.